Reading from the N-terminus, the 205-residue chain is Holliday junction branch migration complex subunit RuvA (205 aa).

The interval 1-64 is domain I; that stretch reads MIGRLRGVLV…EDAQLLYGFI (64 aa). Residues 65–143 form a domain II region; the sequence is TKQERALFRL…SLMEASAGSE (79 aa). The tract at residues 144–156 is flexible linker; the sequence is REFVLQSNYSPAP. The segment at 157–205 is domain III; sequence TVNSAEEDAISALISLGYKPPQASKSVSAAYKEGMDSETLIKAALKSML.

This sequence belongs to the RuvA family. Homotetramer. Forms an RuvA(8)-RuvB(12)-Holliday junction (HJ) complex. HJ DNA is sandwiched between 2 RuvA tetramers; dsDNA enters through RuvA and exits via RuvB. An RuvB hexamer assembles on each DNA strand where it exits the tetramer. Each RuvB hexamer is contacted by two RuvA subunits (via domain III) on 2 adjacent RuvB subunits; this complex drives branch migration. In the full resolvosome a probable DNA-RuvA(4)-RuvB(12)-RuvC(2) complex forms which resolves the HJ.

The protein localises to the cytoplasm. Functionally, the RuvA-RuvB-RuvC complex processes Holliday junction (HJ) DNA during genetic recombination and DNA repair, while the RuvA-RuvB complex plays an important role in the rescue of blocked DNA replication forks via replication fork reversal (RFR). RuvA specifically binds to HJ cruciform DNA, conferring on it an open structure. The RuvB hexamer acts as an ATP-dependent pump, pulling dsDNA into and through the RuvAB complex. HJ branch migration allows RuvC to scan DNA until it finds its consensus sequence, where it cleaves and resolves the cruciform DNA. This Shewanella baltica (strain OS223) protein is Holliday junction branch migration complex subunit RuvA.